We begin with the raw amino-acid sequence, 239 residues long: Succinate dehydrogenase [ubiquinone] iron-sulfur subunit (239 aa).

Positions 11-100 constitute a 2Fe-2S ferredoxin-type domain; that stretch reads FKVYRWNPDK…EMKIYPLPHM (90 aa). Positions 61, 66, 69, and 81 each coordinate [2Fe-2S] cluster. A 4Fe-4S ferredoxin-type domain is found at 141 to 171; the sequence is DREKLDGLYECVLCACCSTSCPSYWWNSDKY. [4Fe-4S] cluster-binding residues include Cys151, Cys154, and Cys157. Cys161 serves as a coordination point for [3Fe-4S] cluster. Trp166 is an a ubiquinone binding site. Residues Cys208 and Cys214 each coordinate [3Fe-4S] cluster. Cys218 is a binding site for [4Fe-4S] cluster.

Belongs to the succinate dehydrogenase/fumarate reductase iron-sulfur protein family. Component of complex II composed of four subunits: a flavoprotein (FP), an iron-sulfur protein (IP), and a cytochrome b composed of a large and a small subunit. [2Fe-2S] cluster serves as cofactor. [3Fe-4S] cluster is required as a cofactor. It depends on [4Fe-4S] cluster as a cofactor.

It is found in the mitochondrion inner membrane. It carries out the reaction a quinone + succinate = fumarate + a quinol. It functions in the pathway carbohydrate metabolism; tricarboxylic acid cycle; fumarate from succinate (eukaryal route): step 1/1. Iron-sulfur protein (IP) subunit of succinate dehydrogenase (SDH) that is involved in complex II of the mitochondrial electron transport chain and is responsible for transferring electrons from succinate to ubiquinone (coenzyme Q). This Reclinomonas americana protein is Succinate dehydrogenase [ubiquinone] iron-sulfur subunit (SDH2).